Here is a 323-residue protein sequence, read N- to C-terminus: Galectin-4 (323 aa).

2 consecutive Galectin domains span residues 19–150 (YYQP…INFI) and 194–323 (YFGR…YVQI). Residue 256 to 262 (WGSEEKK) coordinates a beta-D-galactoside. A Phosphoserine modification is found at Ser-258.

In terms of assembly, monomer.

Galectin that binds lactose and a related range of sugars. May be involved in the assembly of adherens junctions. In Homo sapiens (Human), this protein is Galectin-4 (LGALS4).